Here is a 902-residue protein sequence, read N- to C-terminus: Adhesion G-protein coupled receptor D1 (902 aa).

The N-terminal stretch at 1-25 is a signal peptide; the sequence is MKKLLPLCCWHSWLLLFYCDFQVRG. Residues 26-598 are Extracellular-facing; the sequence is AHTRSHVHPG…GHQVALSSIS (573 aa). N-linked (GlcNAc...) asparagine glycosylation is found at asparagine 68, asparagine 76, asparagine 83, asparagine 89, asparagine 121, asparagine 183, asparagine 217, asparagine 310, asparagine 330, asparagine 337, asparagine 347, asparagine 422, asparagine 504, asparagine 529, and asparagine 561. A Pentraxin (PTX) domain is found at 111–304; sequence KGVTFLYYRK…VNTMAPTNAY (194 aa). Positions 399–585 constitute a GAIN-B domain; it reads QVAIVGSSSM…AILMQVVPLE (187 aa). Intrachain disulfides connect cysteine 538–cysteine 567 and cysteine 555–cysteine 569. Residues 538 to 585 form a GPS region; that stretch reads CAFLDFSSGEGIWSNQGCALTEGNLSYSICRCTHLTNFAILMQVVPLE. The interval 574 to 582 is stachel; it reads NFAILMQVV. 17beta-hydroxy-5alpha-androstan-3-one is bound at residue glutamine 591. Residues 599 to 619 traverse the membrane as a helical segment; the sequence is YIGCSLSVLCLAITLVTFAVL. Over 620-630 the chain is Cytoplasmic; the sequence is SSVSTIRNQRY. A helical transmembrane segment spans residues 631 to 651; it reads HIHANLSCAVLVAQVLLLISF. The Extracellular portion of the chain corresponds to 652 to 661; sequence RFEPGTAPCQ. A disulfide bond links cysteine 660 and cysteine 732. A helical transmembrane segment spans residues 662-682; sequence VLAMLLHYFFLSAFAWMLVEG. The Cytoplasmic portion of the chain corresponds to 683-702; sequence LHLYSMVIKVFGSEDSKHRY. The helical transmembrane segment at 703–723 threads the bilayer; that stretch reads YYGIGWGFPLLICIISIVFAM. Residues 724–739 lie on the Extracellular side of the membrane; the sequence is DSYGTSKNCWLSLGNG. Residues 740–760 traverse the membrane as a helical segment; it reads AIWAFVAPALFIIVVNIGILI. The Cytoplasmic portion of the chain corresponds to 761–788; the sequence is AVTRVISQISAENYKIHGDPSAFKLTAK. Residues 789–809 form a helical membrane-spanning segment; the sequence is AVAVLLPILGTSWVFGVLAVN. Residues 810–812 lie on the Extracellular side of the membrane; the sequence is NQA. Residues 813 to 833 form a helical membrane-spanning segment; it reads MVFQYMFAILNSLQGFFIFLF. Topologically, residues 834 to 902 are cytoplasmic; that stretch reads HCLLNSEVRA…SGHRVDLSAV (69 aa). The segment at 865-902 is disordered; the sequence is KPFSSDIMNGTRPATGSTRLSPWDKSSHSGHRVDLSAV. The segment covering 870 to 884 has biased composition (polar residues); sequence DIMNGTRPATGSTRL. Positions 889–902 are enriched in basic and acidic residues; that stretch reads KSSHSGHRVDLSAV.

It belongs to the G-protein coupled receptor 2 family. Adhesion G-protein coupled receptor (ADGR) subfamily. Heterodimer of 2 chains generated by proteolytic processing; the large extracellular N-terminal fragment and the membrane-bound C-terminal fragment predominantly remain associated and non-covalently linked. Interacts with ESYT1; interaction takes place in absence of cytosolic calcium and inhibits the G protein-coupled receptor activity of ADGRD1. In terms of processing, autoproteolytically processed at the GPS region of the GAIN-B domain; this cleavage modulates receptor activity. Cleavage takes place early in the secretory pathway before N-glycosylation.

The protein localises to the cell membrane. With respect to regulation, forms a heterodimer of 2 chains generated by proteolytic processing that remain associated through non-covalent interactions mediated by the GAIN-B domain. In the inactivated receptor, the Stachel sequence (also named stalk) is embedded in the GAIN-B domain, where it adopts a beta-strand conformation. On activation, the Stachel moves into the 7 transmembrane region and adopts a twisted hook-shaped configuration that forms contacts within the receptor, leading to coupling of a G-alpha protein, which activates signaling. The cleaved GAIN-B and N-terminal domains can then dissociate from the rest of the receptor. Interaction with ESYT1 in absence of cytosolic calcium inhibits the G protein-coupled receptor activity; interaction and inhibition is relieved when cytosolic calcium increases. Its function is as follows. Adhesion G-protein coupled receptor (aGPCR) for androgen hormone 5alpha-dihydrotestosterone (5alpha-DHT), also named 17beta-hydroxy-5alpha-androstan-3-one, the most potent hormone among androgens. Also activated by methenolone drug. Ligand binding causes a conformation change that triggers signaling via guanine nucleotide-binding proteins (G proteins) and modulates the activity of downstream effectors, such as adenylate cyclase. ADGRD1 is coupled to G(s) G proteins and mediates activation of adenylate cyclase activity. Acts as a 5alpha-DHT receptor in muscle cells, thereby increasing intracellular cyclic AMP (cAMP) levels and enhancing muscle strength. In Bos taurus (Bovine), this protein is Adhesion G-protein coupled receptor D1 (ADGRD1).